A 156-amino-acid chain; its full sequence is MDKKVTEVVEAFAQPIVEELNLELVDVEYVKEGQDWFLRVFIDSEKGVDIEECGAVSERLSEALDKEDPIPHLYFLDVSSPGAERPLKKEKDFQQAVGKQVAIKTYEPIDGEKMFEGKLLSYDGTTITLLLTIKTRKKEIQIPMDKVANARLAVTF.

This sequence belongs to the RimP family.

Its subcellular location is the cytoplasm. In terms of biological role, required for maturation of 30S ribosomal subunits. This chain is Ribosome maturation factor RimP, found in Bacillus cereus (strain G9842).